The chain runs to 273 residues: Putative pyruvate, phosphate dikinase regulatory protein (273 aa).

Residue 151 to 158 (GVSRTSKT) participates in ADP binding.

The protein belongs to the pyruvate, phosphate/water dikinase regulatory protein family. PDRP subfamily.

The enzyme catalyses N(tele)-phospho-L-histidyl/L-threonyl-[pyruvate, phosphate dikinase] + ADP = N(tele)-phospho-L-histidyl/O-phospho-L-threonyl-[pyruvate, phosphate dikinase] + AMP + H(+). It catalyses the reaction N(tele)-phospho-L-histidyl/O-phospho-L-threonyl-[pyruvate, phosphate dikinase] + phosphate + H(+) = N(tele)-phospho-L-histidyl/L-threonyl-[pyruvate, phosphate dikinase] + diphosphate. In terms of biological role, bifunctional serine/threonine kinase and phosphorylase involved in the regulation of the pyruvate, phosphate dikinase (PPDK) by catalyzing its phosphorylation/dephosphorylation. The protein is Putative pyruvate, phosphate dikinase regulatory protein of Desulfitobacterium hafniense (strain Y51).